The sequence spans 780 residues: MDMIRPFGTLRMTDVEIVGGKNASIGEMIQGLAQADVRVPGGFATTADAFRLFLRENQIEEKINAKLQALDVNDVNALVAAGKEIRGWVEEARLPAALEDAIRQAYGEMGDDPDVAVRSSATAEDLPEASFAGQQETFLNVRGIEEVLNHVKLVFASLYNDRAISYRVHHNFEHSEVALSAGVQRMVRTDLGVSGVAFTLDTESGFRDAVFVTSSYGLGEMVVQGAVNPDEFFVYKPALEQGKKAVLRRTRGSKQKKMIYAEAGGVKTVDVDEAEQRAFSLSDDDLTELARQCVTIEKHYGRPMDIEWGKDGRDVQIYILQARPETVQSRAGRTLERFELTGKGDVLVEGRAVGSRIGAGVVRVVKSLDQMDSVQDGDILVADMTDPDWEPVMKRASAIVTNRGGRTCHAAIIARELGIPAVVGTGNATRELHNGDEVTVSCAEGDTGYVYAGRLDFHVNRVELDAMPEVGMKIMMNVASPDRAFSFAALPNEGVGLARVEFIISNVIGIHPRALLDYPDVPADVKAQIEEKTAGYASPRDFFREKLAEGVASIAAAFAPKPVIVRLSDFKSNEYHHLIGGPAYEPTEENPMIGFRGASRYRSADFAEAFALECQAMKQVRDDMGLTNVQLMIPFVRTVAEGQRILEILAANGLTQRENDLKVIMMCEVPSNALLADQFLDLFDGFSIGSNDLTQLTLALDRDSGLVADMFDEQNEAVLALMGMAIKAAKAKGKYVGICGQGPSDHPALAQWLMDQGIDSVSLNPDSVLSTWLHLAGEQA.

His-409 serves as the catalytic Tele-phosphohistidine intermediate. The substrate site is built by Arg-499, Arg-566, Glu-668, Gly-689, Ser-690, Asn-691, and Asp-692. Residue Glu-668 participates in Mg(2+) binding. Asp-692 serves as a coordination point for Mg(2+).

This sequence belongs to the PEP-utilizing enzyme family. Mg(2+) is required as a cofactor.

It carries out the reaction pyruvate + ATP + H2O = phosphoenolpyruvate + AMP + phosphate + 2 H(+). It functions in the pathway carbohydrate biosynthesis; gluconeogenesis. Catalyzes the phosphorylation of pyruvate to phosphoenolpyruvate. This Deinococcus radiodurans (strain ATCC 13939 / DSM 20539 / JCM 16871 / CCUG 27074 / LMG 4051 / NBRC 15346 / NCIMB 9279 / VKM B-1422 / R1) protein is Phosphoenolpyruvate synthase (ppsA).